The primary structure comprises 426 residues: Glutamate-1-semialdehyde 2,1-aminomutase (426 aa).

Lysine 265 carries the N6-(pyridoxal phosphate)lysine modification.

It belongs to the class-III pyridoxal-phosphate-dependent aminotransferase family. HemL subfamily. Homodimer. Requires pyridoxal 5'-phosphate as cofactor.

The protein localises to the cytoplasm. The catalysed reaction is (S)-4-amino-5-oxopentanoate = 5-aminolevulinate. Its pathway is porphyrin-containing compound metabolism; protoporphyrin-IX biosynthesis; 5-aminolevulinate from L-glutamyl-tRNA(Glu): step 2/2. The chain is Glutamate-1-semialdehyde 2,1-aminomutase from Erwinia tasmaniensis (strain DSM 17950 / CFBP 7177 / CIP 109463 / NCPPB 4357 / Et1/99).